The following is a 220-amino-acid chain: Ribose-5-phosphate isomerase A (220 aa).

Substrate-binding positions include 28-31 (TGST), 81-84 (DGAD), and 94-97 (KGGG). Glu103 acts as the Proton acceptor in catalysis. Position 121 (Lys121) interacts with substrate.

It belongs to the ribose 5-phosphate isomerase family. As to quaternary structure, homodimer.

The catalysed reaction is aldehydo-D-ribose 5-phosphate = D-ribulose 5-phosphate. It participates in carbohydrate degradation; pentose phosphate pathway; D-ribose 5-phosphate from D-ribulose 5-phosphate (non-oxidative stage): step 1/1. Functionally, catalyzes the reversible conversion of ribose-5-phosphate to ribulose 5-phosphate. The sequence is that of Ribose-5-phosphate isomerase A from Shewanella baltica (strain OS223).